A 338-amino-acid chain; its full sequence is Phospho-2-dehydro-3-deoxyheptonate aldolase (338 aa).

The protein belongs to the class-I DAHP synthase family. As to quaternary structure, homotetramer. A divalent metal cation serves as cofactor.

It catalyses the reaction D-erythrose 4-phosphate + phosphoenolpyruvate + H2O = 7-phospho-2-dehydro-3-deoxy-D-arabino-heptonate + phosphate. Its pathway is metabolic intermediate biosynthesis; chorismate biosynthesis; chorismate from D-erythrose 4-phosphate and phosphoenolpyruvate: step 1/7. With respect to regulation, inhibited by L-phenylalanine and L-tyrosine. In terms of biological role, catalyzes the condensation of phosphoenolpyruvate (PEP) and D-erythrose-4-phosphate (E4P) giving rise to 3-deoxy-D-arabino-heptulosonate-7-phosphate (DAHP). The chain is Phospho-2-dehydro-3-deoxyheptonate aldolase (aroF) from Thermotoga maritima (strain ATCC 43589 / DSM 3109 / JCM 10099 / NBRC 100826 / MSB8).